The primary structure comprises 791 residues: MYGSFTQLGDSFSIDLRVVDALGVKPAKPFFIQKQGIINILPAVDELVDRVAGEFTSGNAIADVKVRGTKVLDPDVVLMRLSTRKGDPIDPAAINKEIKRIWDLGYFSDVQASVEQGGDGTVLVYTVTEKPRIDNIVIEGSDKVGHDDILAAMSSKTGSVLNDKLLAQDLQKVTELYRKEGFYLAHVTHRVEARQGAASATLVLNVEEGNKLYIKKVKIEGLKELSESEVKDILALSERGMFSWFTGTGVLKDELLERDSAAITAYCLNHGYVDALVSAPKVDYEEDGIIVSFAVKEGPRYKLGKIGFDGELIDTDERLLKVVKLDDHKKDNQYFALDVMQTDDKLLSDYYADYGYAFAEINSRTQKSAEEHVIDVTYVIRKRQKVYINRVLVEGNQKTRDNVVLREMRIADGDMFEGAKLRRSNERLNRTRYFSQVDTELVPTQKEDEVDLKVKVKEQNTGALIGGVGYSTFYQFGVSGTIMERNLFGKGYYASLQAFFSGKRNSFIASFTNPRVNDGDLSFGNDAYISREYFDDFSKNTIGDTIRFALPVGEYSTVGWGYRLDRYELYDIDDDAAKIIKEREGENISSVAHVRFTRDTTDSKEKPTKGTIFKTFNEFGGGPIGGDDDFIKPVVEFQAYHQLAPNHVLHGRTRGGAVLENGQGDVPVFERFYIGGIDSIRGYNSRDISPRDPESGDRIGGDRMAFVNLEYIWVFKPDLGLALVPFFDMGINYDSSAEFNWDDELKKSVGLEMRWRSPMGDLRFAYGFPLDEGRDGEQHSGRFEFSMGQFF.

5 consecutive POTRA domains span residues 59 to 130, 131 to 209, 212 to 298, 301 to 383, and 386 to 459; these read NAIA…VTEK, PRID…VEEG, LYIK…VKEG, YKLG…IRKR, and VYIN…VKEQ.

Belongs to the BamA family. In terms of assembly, part of the Bam complex.

It localises to the cell outer membrane. Part of the outer membrane protein assembly complex, which is involved in assembly and insertion of beta-barrel proteins into the outer membrane. The protein is Outer membrane protein assembly factor BamA of Nitratidesulfovibrio vulgaris (strain ATCC 29579 / DSM 644 / CCUG 34227 / NCIMB 8303 / VKM B-1760 / Hildenborough) (Desulfovibrio vulgaris).